The primary structure comprises 235 residues: Secreted RxLR effector protein 27 (235 aa).

The N-terminal stretch at 1 to 25 (MTNLFTRHTRRSLTALALLSGGVYA) is a signal peptide. The RxLR-dEER motif lies at 36–60 (RSLRVFVTGGQVLWDYRIHFKGIER).

It belongs to the RxLR effector family.

It localises to the secreted. The protein resides in the host cytoplasm. The protein localises to the host nucleus. In terms of biological role, effector that acts as a broad suppressor of cell death to interrupt plant immunity. Inhibits cell death induced by cell death-inducing proteins, including the PAMP elicitor INF1 from P.infestans. The protein is Secreted RxLR effector protein 27 of Plasmopara viticola (Downy mildew of grapevine).